A 141-amino-acid polypeptide reads, in one-letter code: Large ribosomal subunit protein uL11 (141 aa).

Belongs to the universal ribosomal protein uL11 family. Part of the ribosomal stalk of the 50S ribosomal subunit. Interacts with L10 and the large rRNA to form the base of the stalk. L10 forms an elongated spine to which L12 dimers bind in a sequential fashion forming a multimeric L10(L12)X complex. In terms of processing, one or more lysine residues are methylated.

Forms part of the ribosomal stalk which helps the ribosome interact with GTP-bound translation factors. This Chlamydia felis (strain Fe/C-56) (Chlamydophila felis) protein is Large ribosomal subunit protein uL11.